Consider the following 899-residue polypeptide: Periodic tryptophan protein 2 homolog (899 aa).

WD repeat units follow at residues 9-52, 53-92, 94-132, 149-188, 193-232, 252-291, 294-334, 337-376, 379-418, 422-464, 465-504, 507-546, and 569-608; these read NLLG…TLPF, SHRK…VLYH, SFKA…DANA, QHFD…GFTP, GHRQ…GQDE, QNSA…MIHT, ISQN…YILK, GHFD…CIVT, EHTS…NFRT, PERL…DRLS, GHEG…QTSE, QLNS…QQAG, and AGTK…LLKK. Positions 639-668 are disordered; the sequence is DEQGEASDFEDRIDRSLPGSKRGDPSARRK. Basic and acidic residues predominate over residues 647 to 668; that stretch reads FEDRIDRSLPGSKRGDPSARRK. A WD 14 repeat occupies 669–709; sequence NPEVRVNGVAFSPNGSAFCAASTEGLLIYSLDTTIQFDPFD. The segment at 866–899 is disordered; it reads TGSDEQPGAGGMSLNDVMQQDEGNASEDEWIGLV. Acidic residues predominate over residues 889–899; the sequence is NASEDEWIGLV.

Belongs to the WD repeat PWP2 family.

The chain is Periodic tryptophan protein 2 homolog from Neurospora crassa (strain ATCC 24698 / 74-OR23-1A / CBS 708.71 / DSM 1257 / FGSC 987).